We begin with the raw amino-acid sequence, 463 residues long: Elongation factor 1-alpha 1 (463 aa).

Residues 5–242 (KIHINIVVIG…DAILPPARPT (238 aa)) form the tr-type G domain. Residues 14–21 (GHVDSGKS) form a G1 region. Residue 14-21 (GHVDSGKS) participates in GTP binding. The interval 70-74 (GITID) is G2. A G3 region spans residues 91–94 (DAPG). Residues 91–95 (DAPGH) and 153–156 (NKMD) contribute to the GTP site. The tract at residues 153–156 (NKMD) is G4. The G5 stretch occupies residues 194 to 196 (SGW). A 5-glutamyl glycerylphosphorylethanolamine mark is found at glutamate 301 and glutamate 374.

It belongs to the TRAFAC class translation factor GTPase superfamily. Classic translation factor GTPase family. EF-Tu/EF-1A subfamily.

Its subcellular location is the cytoplasm. Its function is as follows. This protein promotes the GTP-dependent binding of aminoacyl-tRNA to the A-site of ribosomes during protein biosynthesis. The chain is Elongation factor 1-alpha 1 from Drosophila melanogaster (Fruit fly).